A 428-amino-acid polypeptide reads, in one-letter code: Adenylosuccinate synthetase (428 aa).

Residues 12–18 and 40–42 each bind GTP; these read GDEGKGK and GHT. The active-site Proton acceptor is the aspartate 13. Residues aspartate 13 and glycine 40 each coordinate Mg(2+). IMP contacts are provided by residues 13–16, 38–41, threonine 128, arginine 142, glutamine 222, threonine 237, and arginine 301; these read DEGK and NAGH. Histidine 41 functions as the Proton donor in the catalytic mechanism. 297–303 lines the substrate pocket; that stretch reads VNTGRAR. GTP-binding positions include arginine 303, 329–331, and 411–413; these read KLD and STS.

The protein belongs to the adenylosuccinate synthetase family. In terms of assembly, homodimer. Requires Mg(2+) as cofactor.

Its subcellular location is the cytoplasm. It catalyses the reaction IMP + L-aspartate + GTP = N(6)-(1,2-dicarboxyethyl)-AMP + GDP + phosphate + 2 H(+). It participates in purine metabolism; AMP biosynthesis via de novo pathway; AMP from IMP: step 1/2. Its function is as follows. Plays an important role in the de novo pathway of purine nucleotide biosynthesis. Catalyzes the first committed step in the biosynthesis of AMP from IMP. This is Adenylosuccinate synthetase from Caulobacter sp. (strain K31).